The chain runs to 445 residues: Exodeoxyribonuclease 7 large subunit (445 aa).

This sequence belongs to the XseA family. As to quaternary structure, heterooligomer composed of large and small subunits.

The protein localises to the cytoplasm. It carries out the reaction Exonucleolytic cleavage in either 5'- to 3'- or 3'- to 5'-direction to yield nucleoside 5'-phosphates.. Bidirectionally degrades single-stranded DNA into large acid-insoluble oligonucleotides, which are then degraded further into small acid-soluble oligonucleotides. The chain is Exodeoxyribonuclease 7 large subunit from Nautilia profundicola (strain ATCC BAA-1463 / DSM 18972 / AmH).